Consider the following 1404-residue polypeptide: DNA (cytosine-5)-methyltransferase 3 (1404 aa).

Residues 1-10 (MKTKAGKQKK) show a composition bias toward basic residues. Residues 1-35 (MKTKAGKQKKRSVDSDDDVSRERRPKRATSGTNFK) are disordered. Over residues 11–22 (RSVDSDDDVSRE) the composition is skewed to basic and acidic residues. Lysine 486 participates in a covalent cross-link: Glycyl lysine isopeptide (Lys-Gly) (interchain with G-Cter in ubiquitin). BAH domains lie at 614–748 (RKMD…FSLP) and 788–929 (IKYS…KKLP). The SAM-dependent MTase C5-type domain occupies 969–1402 (LATLDIFAGC…RKLKEALHLR (434 aa)). Cysteine 1085 is a catalytic residue.

The protein belongs to the class I-like SAM-binding methyltransferase superfamily. C5-methyltransferase family.

It localises to the nucleus. It catalyses the reaction a 2'-deoxycytidine in DNA + S-adenosyl-L-methionine = a 5-methyl-2'-deoxycytidine in DNA + S-adenosyl-L-homocysteine + H(+). In terms of biological role, maintains chromatin CpG methylation that plays a role in genomic imprinting, regulation of embryogenesis and seed viability. Required for proper patterns of CG DNA methylation in dividing cells. Required during the endosperm development in seeds. The sequence is that of DNA (cytosine-5)-methyltransferase 3 (MET3) from Arabidopsis thaliana (Mouse-ear cress).